Reading from the N-terminus, the 105-residue chain is Phosphoribosyl-ATP pyrophosphatase (105 aa).

Belongs to the PRA-PH family.

The protein localises to the cytoplasm. It carries out the reaction 1-(5-phospho-beta-D-ribosyl)-ATP + H2O = 1-(5-phospho-beta-D-ribosyl)-5'-AMP + diphosphate + H(+). Its pathway is amino-acid biosynthesis; L-histidine biosynthesis; L-histidine from 5-phospho-alpha-D-ribose 1-diphosphate: step 2/9. This chain is Phosphoribosyl-ATP pyrophosphatase, found in Vesicomyosocius okutanii subsp. Calyptogena okutanii (strain HA).